The primary structure comprises 338 residues: Heat-inducible transcription repressor HrcA (338 aa).

Belongs to the HrcA family.

Its function is as follows. Negative regulator of class I heat shock genes (grpE-dnaK-dnaJ and groELS operons). Prevents heat-shock induction of these operons. The polypeptide is Heat-inducible transcription repressor HrcA (Bacillus cereus (strain B4264)).